A 205-amino-acid polypeptide reads, in one-letter code: Thymidylate kinase (205 aa).

Position 11 to 18 (G11 to S18) interacts with ATP.

Belongs to the thymidylate kinase family.

The catalysed reaction is dTMP + ATP = dTDP + ADP. In terms of biological role, phosphorylation of dTMP to form dTDP in both de novo and salvage pathways of dTTP synthesis. The protein is Thymidylate kinase of Ruthia magnifica subsp. Calyptogena magnifica.